Here is a 474-residue protein sequence, read N- to C-terminus: Bifunctional protein HldE (474 aa).

The ribokinase stretch occupies residues 1–318; sequence MKVTLPDFNK…ENAIRGRADN (318 aa). 195–198 is an ATP binding site; it reads NMSE. Residue aspartate 264 is part of the active site. Residues 344–474 are cytidylyltransferase; it reads MTNGCFDILH…TNIINAIKKK (131 aa).

This sequence in the N-terminal section; belongs to the carbohydrate kinase PfkB family. In the C-terminal section; belongs to the cytidylyltransferase family. In terms of assembly, homodimer.

It carries out the reaction D-glycero-beta-D-manno-heptose 7-phosphate + ATP = D-glycero-beta-D-manno-heptose 1,7-bisphosphate + ADP + H(+). It catalyses the reaction D-glycero-beta-D-manno-heptose 1-phosphate + ATP + H(+) = ADP-D-glycero-beta-D-manno-heptose + diphosphate. The protein operates within nucleotide-sugar biosynthesis; ADP-L-glycero-beta-D-manno-heptose biosynthesis; ADP-L-glycero-beta-D-manno-heptose from D-glycero-beta-D-manno-heptose 7-phosphate: step 1/4. It participates in nucleotide-sugar biosynthesis; ADP-L-glycero-beta-D-manno-heptose biosynthesis; ADP-L-glycero-beta-D-manno-heptose from D-glycero-beta-D-manno-heptose 7-phosphate: step 3/4. Catalyzes the phosphorylation of D-glycero-D-manno-heptose 7-phosphate at the C-1 position to selectively form D-glycero-beta-D-manno-heptose-1,7-bisphosphate. Its function is as follows. Catalyzes the ADP transfer from ATP to D-glycero-beta-D-manno-heptose 1-phosphate, yielding ADP-D-glycero-beta-D-manno-heptose. This is Bifunctional protein HldE from Proteus mirabilis (strain HI4320).